The chain runs to 89 residues: Small ribosomal subunit protein uS15 (89 aa).

A compositionally biased stretch (basic and acidic residues) spans methionine 1–aspartate 21. The disordered stretch occupies residues methionine 1–proline 25.

This sequence belongs to the universal ribosomal protein uS15 family. Part of the 30S ribosomal subunit. Forms a bridge to the 50S subunit in the 70S ribosome, contacting the 23S rRNA.

Its function is as follows. One of the primary rRNA binding proteins, it binds directly to 16S rRNA where it helps nucleate assembly of the platform of the 30S subunit by binding and bridging several RNA helices of the 16S rRNA. In terms of biological role, forms an intersubunit bridge (bridge B4) with the 23S rRNA of the 50S subunit in the ribosome. The protein is Small ribosomal subunit protein uS15 of Myxococcus xanthus (strain DK1622).